The following is a 608-amino-acid chain: Centromere DNA-binding protein complex CBF3 subunit B (608 aa).

A DNA-binding region (zn(2)-C6 fungal-type) is located at residues 14–42 (CSVCTRRKVKCDRMIPCGNCRKRGQDSEC). At Ser575 the chain carries Phosphoserine.

In terms of assembly, component of the CBF3 copmplex, which is formed of CBF3A/CBF2, CBF3B/CEP3, CBF3C/CTF13 and CBF3D.

Its subcellular location is the nucleus. The protein resides in the chromosome. The protein localises to the centromere. Acts as a component of the centromere DNA-binding protein complex CBF3, which is essential for chromosome segregation and movement of centromeres along microtubules. CBF3 is required for the recruitment of other kinetochore complexes to CEN DNA. It plays a role in the attachment of chromosomes to the spindle and binds selectively to a highly conserved DNA sequence called CDEIII, found in centromers and in several promoters. The sequence is that of Centromere DNA-binding protein complex CBF3 subunit B (CEP3) from Saccharomyces cerevisiae (strain ATCC 204508 / S288c) (Baker's yeast).